Reading from the N-terminus, the 205-residue chain is Transcriptional regulator GfcR (205 aa).

Belongs to the purine/pyrimidine phosphoribosyltransferase family. GfcR subfamily.

The protein is Transcriptional regulator GfcR of Methanococcus maripaludis (strain C7 / ATCC BAA-1331).